Consider the following 595-residue polypeptide: 3-hydroxy-3-methylglutaryl-coenzyme A reductase 2 (595 aa).

N35 is a glycosylation site (N-linked (GlcNAc...) asparagine). Helical transmembrane passes span 48–68 (LPLYLTNGLFFTMFFSVMYFL) and 92–112 (AIVSLIASVIYLLGFFGIGFV). The linker stretch occupies residues 113-183 (QTFVSRGNND…SPLITPASSE (71 aa)). N121 carries N-linked (GlcNAc...) asparagine glycosylation. A catalytic region spans residues 184-595 (EDEEIINSVV…KYNRSTKASS (412 aa)). The active-site Charge relay system is E278. N-linked (GlcNAc...) asparagine glycosylation occurs at N342. K410 (charge relay system) is an active-site residue. N-linked (GlcNAc...) asparagine glycosylation occurs at N455. The active-site Charge relay system is the D486. Residue H584 is the Proton donor of the active site. Residue N588 is glycosylated (N-linked (GlcNAc...) asparagine).

Belongs to the HMG-CoA reductase family. In terms of tissue distribution, expressed in young flowers and in mature sepals and ovaries.

Its subcellular location is the endoplasmic reticulum membrane. It catalyses the reaction (R)-mevalonate + 2 NADP(+) + CoA = (3S)-3-hydroxy-3-methylglutaryl-CoA + 2 NADPH + 2 H(+). The protein operates within metabolic intermediate biosynthesis; (R)-mevalonate biosynthesis; (R)-mevalonate from acetyl-CoA: step 3/3. Its function is as follows. Catalyzes the synthesis of mevalonate. The specific precursor of all isoprenoid compounds present in plants. The polypeptide is 3-hydroxy-3-methylglutaryl-coenzyme A reductase 2 (HMG2) (Solanum tuberosum (Potato)).